The following is a 341-amino-acid chain: Aromatic amino acid aminotransferase (341 aa).

K213 carries the N6-(pyridoxal phosphate)lysine modification.

The protein belongs to the class-II pyridoxal-phosphate-dependent aminotransferase family. In terms of assembly, homodimer. It depends on pyridoxal 5'-phosphate as a cofactor.

The catalysed reaction is an aromatic L-alpha-amino acid + 2-oxoglutarate = an aromatic oxo-acid + L-glutamate. Functionally, aminotransferase that catalyzes the conversion of aromatic amino acids and 2-oxoglutarate into corresponding aromatic oxo acids and L-glutamate. This Corynebacterium glutamicum (strain R) protein is Aromatic amino acid aminotransferase.